The sequence spans 379 residues: DNA (cytosine-5)-methyltransferase (379 aa).

The SAM-dependent MTase C5-type domain maps to 4–366 (LRVLEFYSGI…KVLVSPNEEE (363 aa)). Cys-78 is a catalytic residue. The span at 178–192 (KKEQDKHNEKVDENK) shows a compositional bias: basic and acidic residues. The segment at 178–205 (KKEQDKHNEKVDENKLNNNSNNNNEQNK) is disordered. Low complexity predominate over residues 193-203 (LNNNSNNNNEQ).

Belongs to the class I-like SAM-binding methyltransferase superfamily. C5-methyltransferase family.

The protein resides in the nucleus. The enzyme catalyses a 2'-deoxycytidine in DNA + S-adenosyl-L-methionine = a 5-methyl-2'-deoxycytidine in DNA + S-adenosyl-L-homocysteine + H(+). Its function is as follows. Involved in epigenetic gene silencing. Methylates specific cytosine residues in the retrotransposons DIRS-1 and Skipper. The protein is DNA (cytosine-5)-methyltransferase (dnmA) of Dictyostelium discoideum (Social amoeba).